The chain runs to 671 residues: DNA polymerase kappa (671 aa).

The UmuC domain maps to W105–G285. Mg(2+) contacts are provided by D109 and D200. Residue E201 is part of the active site. A UBZ3-type zinc finger spans residues Y576–E613. Residues C583, C586, H601, and H605 each coordinate Zn(2+). Positions A607–K671 are disordered. The short motif at K625–E632 is the Nuclear localization signal element. Basic and acidic residues predominate over residues L629 to K650. Over residues T659 to K671 the composition is skewed to polar residues.

It belongs to the DNA polymerase type-Y family. Mg(2+) is required as a cofactor. In terms of tissue distribution, expressed in roots, leaves, stems, flowers and siliques. Present in endoreduplicating cells.

It is found in the nucleus. It carries out the reaction DNA(n) + a 2'-deoxyribonucleoside 5'-triphosphate = DNA(n+1) + diphosphate. Its activity is regulated as follows. Unable to bypass a single 1,N(6)-ethenoadenine (epsilon-dA) or an abasic site lesions in DNA templates. Its function is as follows. Template-directed low-fidelity DNA polymerase specifically involved in DNA repair. Able to extend primer-terminal mispairs, and to insert nucleotides opposite to a single 7,8-dihydro-8-oxoGuanine (8-oxoG) lesion and moderately extend from the resulting primer end, thus leading to both error-free and error-prone bypass of 8-oxoG DNA lesions. Probably involved in consecutive DNA replication cycles in the absence of mitosis. Binds preferentially template-primer DNA substrates or single-stranded DNA. Plays an important role in translesion synthesis, where the normal high-fidelity DNA polymerases cannot proceed and DNA synthesis stalls. Depending on the context, it inserts the correct base, but causes frequent base transitions, transversions and frameshifts. This is DNA polymerase kappa from Arabidopsis thaliana (Mouse-ear cress).